Consider the following 642-residue polypeptide: Threonine--tRNA ligase (642 aa).

A catalytic region spans residues 239 to 530 (DHRKLGKELN…LTEHYAGAFP (292 aa)). Positions 331, 382, and 507 each coordinate Zn(2+).

Belongs to the class-II aminoacyl-tRNA synthetase family. In terms of assembly, homodimer. Requires Zn(2+) as cofactor.

Its subcellular location is the cytoplasm. It carries out the reaction tRNA(Thr) + L-threonine + ATP = L-threonyl-tRNA(Thr) + AMP + diphosphate + H(+). Functionally, catalyzes the attachment of threonine to tRNA(Thr) in a two-step reaction: L-threonine is first activated by ATP to form Thr-AMP and then transferred to the acceptor end of tRNA(Thr). Also edits incorrectly charged L-seryl-tRNA(Thr). In Lawsonia intracellularis (strain PHE/MN1-00), this protein is Threonine--tRNA ligase.